Here is a 456-residue protein sequence, read N- to C-terminus: Bifunctional protein GlmU (456 aa).

Residues 1–229 form a pyrophosphorylase region; the sequence is MLNSAMSVVI…ISETDGVNNR (229 aa). UDP-N-acetyl-alpha-D-glucosamine-binding positions include 11–14, lysine 25, glutamine 76, 81–82, 103–105, glycine 140, glutamate 154, asparagine 169, and asparagine 227; these read LAAG, GT, and YGD. Position 105 (aspartate 105) interacts with Mg(2+). Asparagine 227 serves as a coordination point for Mg(2+). The linker stretch occupies residues 230 to 250; it reads LQLSRLERIYQAEQAEKLLLS. The interval 251–456 is N-acetyltransferase; sequence GVMLRDPARF…QGWQRPVKKK (206 aa). Residues arginine 333 and lysine 351 each contribute to the UDP-N-acetyl-alpha-D-glucosamine site. The active-site Proton acceptor is histidine 363. UDP-N-acetyl-alpha-D-glucosamine is bound by residues tyrosine 366 and asparagine 377. Acetyl-CoA is bound by residues alanine 380, 386 to 387, serine 405, alanine 423, and arginine 440; that span reads NY.

The protein in the N-terminal section; belongs to the N-acetylglucosamine-1-phosphate uridyltransferase family. In the C-terminal section; belongs to the transferase hexapeptide repeat family. In terms of assembly, homotrimer. The cofactor is Mg(2+).

Its subcellular location is the cytoplasm. The catalysed reaction is alpha-D-glucosamine 1-phosphate + acetyl-CoA = N-acetyl-alpha-D-glucosamine 1-phosphate + CoA + H(+). The enzyme catalyses N-acetyl-alpha-D-glucosamine 1-phosphate + UTP + H(+) = UDP-N-acetyl-alpha-D-glucosamine + diphosphate. It participates in nucleotide-sugar biosynthesis; UDP-N-acetyl-alpha-D-glucosamine biosynthesis; N-acetyl-alpha-D-glucosamine 1-phosphate from alpha-D-glucosamine 6-phosphate (route II): step 2/2. Its pathway is nucleotide-sugar biosynthesis; UDP-N-acetyl-alpha-D-glucosamine biosynthesis; UDP-N-acetyl-alpha-D-glucosamine from N-acetyl-alpha-D-glucosamine 1-phosphate: step 1/1. The protein operates within bacterial outer membrane biogenesis; LPS lipid A biosynthesis. Catalyzes the last two sequential reactions in the de novo biosynthetic pathway for UDP-N-acetylglucosamine (UDP-GlcNAc). The C-terminal domain catalyzes the transfer of acetyl group from acetyl coenzyme A to glucosamine-1-phosphate (GlcN-1-P) to produce N-acetylglucosamine-1-phosphate (GlcNAc-1-P), which is converted into UDP-GlcNAc by the transfer of uridine 5-monophosphate (from uridine 5-triphosphate), a reaction catalyzed by the N-terminal domain. The polypeptide is Bifunctional protein GlmU (Salmonella heidelberg (strain SL476)).